Reading from the N-terminus, the 930-residue chain is Isoleucine--tRNA ligase (930 aa).

A 'HIGH' region motif is present at residues 57 to 67 (PYANGNIHVGH). Glutamate 554 provides a ligand contact to L-isoleucyl-5'-AMP. The short motif at 595 to 599 (KMSKS) is the 'KMSKS' region element. Lysine 598 is a binding site for ATP. Zn(2+)-binding residues include cysteine 888, cysteine 891, cysteine 908, and cysteine 911.

It belongs to the class-I aminoacyl-tRNA synthetase family. IleS type 1 subfamily. As to quaternary structure, monomer. Zn(2+) serves as cofactor.

The protein localises to the cytoplasm. It carries out the reaction tRNA(Ile) + L-isoleucine + ATP = L-isoleucyl-tRNA(Ile) + AMP + diphosphate. Its function is as follows. Catalyzes the attachment of isoleucine to tRNA(Ile). As IleRS can inadvertently accommodate and process structurally similar amino acids such as valine, to avoid such errors it has two additional distinct tRNA(Ile)-dependent editing activities. One activity is designated as 'pretransfer' editing and involves the hydrolysis of activated Val-AMP. The other activity is designated 'posttransfer' editing and involves deacylation of mischarged Val-tRNA(Ile). The sequence is that of Isoleucine--tRNA ligase from Streptococcus pneumoniae (strain Hungary19A-6).